Here is a 532-residue protein sequence, read N- to C-terminus: MEVQRNFFIFAFLFVSFLLWQAWQSQMFLNKKTNEKIDPIFHFIDVKKNKKKIFIKNDVISLVVNMYGGDVEEASLLAYKDTLYSSRPFKLLETGSDFIYQAQSGLIGKDGPDSSINDSRPLYSANKNFFVLGPNEKELRVPIKWLSKNGVIYKKTFILKPNRYDVQIEYDVYNPSKESLNMNIFGQIKQTINLPKKRNVYSGNFALQTFRGAAYSSDDNKYEKYKFDMIANNKNLHIMTESGWIAMLQQYFAVAWIPDNLGKNTIYTSSLDHDTAVIGYKSPIINIPPNSRSIIKSKLWIGPKIQKEMKLVAPNLDLTVDYGWLWFLSQPLFKLLTILYSIIGNWGFSIILITFIMRGLTYPLTKAQYISMAKMRALQPKIQEIKEKFSKDKQRISQEMILLYKKEKINPLGGFLPIFIQMPIFLSLYYMLIGSVELRHAPFLLWIHDLSSQDPYYVLPVIMGLTMFFIQKISSTNHISDPLQKKIMNFMPVIFTAFFLWFPSGLVLYYIISNLVTIIQQKFILSNLEKNR.

A run of 5 helical transmembrane segments spans residues 7-27 (FFIFAFLFVSFLLWQAWQSQM), 336-356 (LTILYSIIGNWGFSIILITFI), 413-433 (GGFLPIFIQMPIFLSLYYMLI), 450-470 (LSSQDPYYVLPVIMGLTMFFI), and 492-512 (PVIFTAFFLWFPSGLVLYYII).

The protein belongs to the OXA1/ALB3/YidC family. Type 1 subfamily. As to quaternary structure, interacts with the Sec translocase complex via SecD. Specifically interacts with transmembrane segments of nascent integral membrane proteins during membrane integration.

It localises to the cell membrane. Functionally, required for the insertion and/or proper folding and/or complex formation of integral membrane proteins into the membrane. Involved in integration of membrane proteins that insert both dependently and independently of the Sec translocase complex, as well as at least some lipoproteins. Aids folding of multispanning membrane proteins. In Buchnera aphidicola subsp. Acyrthosiphon pisum (strain APS) (Acyrthosiphon pisum symbiotic bacterium), this protein is Membrane protein insertase YidC.